The primary structure comprises 79 residues: Conotoxin Vi6.3 (79 aa).

The first 22 residues, 1–22 (MKLTCVLIITVLFLTASQLITA), serve as a signal peptide directing secretion. Positions 23-47 (DYSRDQRQYRAVRLGDEMRNFKGAR) are excised as a propeptide. Intrachain disulfides connect cysteine 49–cysteine 62, cysteine 56–cysteine 67, and cysteine 61–cysteine 77. Residues proline 60 and proline 63 each carry the 4-hydroxyproline modification.

It belongs to the conotoxin O1 superfamily. In terms of tissue distribution, expressed by the venom duct.

The protein resides in the secreted. Its function is as follows. Ion channel inhibitor that inhibits the increase in intracellular calcium upon depolarization in DRG neurons. In vivo, both intraperitoneal and intracranial injections into mice induce hyperactivity. This is Conotoxin Vi6.3 from Conus virgo (Virgin cone).